Reading from the N-terminus, the 372-residue chain is MVKELNLEQYNVRTDLAIEAHDIVKEQEAQEAKQPASTVEGFDIEETVMDGVKVSKVVIHPLGAERTGKKAGRYLTFESQGIRKKDTDIQEKMERVFAQQFSQFMGELGITKDHTCLVVGLGNWNVTPDALGPITVENLLVTRHLFTLAPEEVGEGFRPVSAIAPGVMGVTGIETSDVIYGIIEQTKPDFVIAVDALASRSIERVNATIQVSDTGIHPGSGVGNKRKELSKETLGIPVIAVGIPTVVDAVTITSDAIDYVLKHFGRELREREKPSRALAPAGMTFGERRELTDEDLPPEEKRKTFLGMMGTLPEGEKRQLIQEVLAPLGHNLMVTPKEVDVFIEDMANVIASGLNAALHQGVNQDNVGAYTH.

Positions 1–15 are excised as a propeptide; it reads MVKELNLEQYNVRTD.

The protein belongs to the peptidase A25 family. Homotetramer. In terms of processing, autoproteolytically processed. The inactive tetrameric zymogen termed p46 autoprocesses to a smaller form termed p41, which is active only during spore germination.

It catalyses the reaction Endopeptidase action with P4 Glu or Asp, P1 preferably Glu &gt; Asp, P1' hydrophobic and P2' Ala.. In terms of biological role, initiates the rapid degradation of small, acid-soluble proteins during spore germination. The chain is Germination protease from Halalkalibacterium halodurans (strain ATCC BAA-125 / DSM 18197 / FERM 7344 / JCM 9153 / C-125) (Bacillus halodurans).